The following is a 449-amino-acid chain: Probable ubiquitin carboxyl-terminal hydrolase 8 (449 aa).

A UBP-type zinc finger spans residues 6 to 113 (EGCQHLKLKP…FKIKNIKAWQ (108 aa)). Positions 8, 10, 38, 41, 51, 54, 59, 64, 68, 74, 87, and 90 each coordinate Zn(2+). Residues 145 to 435 (RGIQNLGATC…QAYLLFYHER (291 aa)) enclose the USP domain. The Nucleophile role is filled by Cys-154. 12 residues coordinate Zn(2+): His-178, Cys-183, Cys-188, Cys-191, His-246, Cys-257, Cys-259, His-262, Cys-275, Cys-278, Cys-317, and Cys-320. Catalysis depends on His-395, which acts as the Proton acceptor.

Belongs to the peptidase C19 family. UBP8 subfamily. Component of the 1.8 MDa SAGA (Spt-Ada-Gcn5 acetyltransferase) complex, which is composed of 19 subunits tra1, spt7, taf5, ngg1/ada3, sgf73, spt20, spt8, taf12, taf6, hfi1/ada1, ubp8, gcn5, ada2, spt3, sgf29, taf10, taf9, sgf11 and sus1. The SAGA complex is composed of 4 modules, namely the HAT (histone acetyltransferase) module (gcn5, ada2, ngg1/ada3 and sgf29), the DUB (deubiquitinating) module (ubp8, sgf11, sgf73 and sus1), the core or TAF (TBP-associated factor) module (taf5, taf6, taf9, taf10 and taf12), and the Tra1 or SPT (Suppressor of Ty) module (tra1, hfi1/ada1, spt3, spt7, spt8 and spt20). The Tra1/SPT module binds activators, the core module recruits TBP (TATA-binding protein), the HAT module contains the histone H3 acetyltransferase gcn5, and the DUB module comprises the histone H2B deubiquitinase ubp8.

It is found in the nucleus. Its subcellular location is the nucleoplasm. It catalyses the reaction Thiol-dependent hydrolysis of ester, thioester, amide, peptide and isopeptide bonds formed by the C-terminal Gly of ubiquitin (a 76-residue protein attached to proteins as an intracellular targeting signal).. Functionally, histone deubiquitinating enzyme component of the transcription coactivator SAGA complex. SAGA acts as a general cofactor required for essentially all RNA polymerase II transcription. At the promoters, SAGA is required for transcription pre-initiation complex (PIC) recruitment. It influences RNA polymerase II transcriptional activity through different activities such as TBP interaction (via core/TAF module) and promoter selectivity, interaction with transcription activators (via Tra1/SPT module), and chromatin modification through histone acetylation (via HAT module) and deubiquitination (via DUB module). SAGA preferentially acetylates histones H3 (to form H3K9ac, H3K14ac, H3K18ac and H3K23ac) and H2B and deubiquitinates histone H2B. SAGA interacts with DNA via upstream activating sequences (UASs). Within the DUB module, the correctly positioned zinc finger domains of sgf11 and sgf73 are both required to fully activate the ubiquitin hydrolase ubp8. The DUB module is also linked to the splicing efficiency of many transcripts. The chain is Probable ubiquitin carboxyl-terminal hydrolase 8 (ubp8) from Schizosaccharomyces pombe (strain 972 / ATCC 24843) (Fission yeast).